The primary structure comprises 102 residues: Large ribosomal subunit protein bL21 (102 aa).

This sequence belongs to the bacterial ribosomal protein bL21 family. Part of the 50S ribosomal subunit. Contacts protein L20.

In terms of biological role, this protein binds to 23S rRNA in the presence of protein L20. This Bacillus subtilis (strain 168) protein is Large ribosomal subunit protein bL21.